Consider the following 103-residue polypeptide: UPF0145 protein HH_1800 (103 aa).

Belongs to the UPF0145 family.

This is UPF0145 protein HH_1800 from Helicobacter hepaticus (strain ATCC 51449 / 3B1).